Reading from the N-terminus, the 346-residue chain is MSERLVTSNEIGIDSTNEYSLRPEKINEYIGQDKVKERLNIFIKAAQRREEALDHVILYGPPGLGKTTLANIIANEMGGNLKITSGPAIERAGDLAAILTTLNTNDVLFIDEIHRLNRSVEEILYPAMEDYVLDIIIGKGAASKSIRLDLPKFTLIGATTRIGMLSSPLRDRLGVLCSMEYYTDEQLKEIIIRSAEILGCHITEEGAFEIAKRSRGTPRIANRLLKRVRDFAEVLYDNEITEEAAKKSLEILEVDGEGFDRIDNKILEAIIDNFNGGPVGIETLAYFVGEELDTIEDVYEPYLLQKGFIVRTPRGRMATDKAYKHLGRVRFNESKIDSKQCTLFEK.

Residues methionine 1–tyrosine 182 are large ATPase domain (RuvB-L). ATP-binding positions include leucine 21, arginine 22, glycine 63, lysine 66, threonine 67, threonine 68, glutamate 129–tyrosine 131, arginine 172, tyrosine 182, and arginine 219. A Mg(2+)-binding site is contributed by threonine 67. The interval threonine 183–glutamate 253 is small ATPAse domain (RuvB-S). The tract at residues glycine 256–lysine 346 is head domain (RuvB-H). Positions 311 and 316 each coordinate DNA.

The protein belongs to the RuvB family. As to quaternary structure, homohexamer. Forms an RuvA(8)-RuvB(12)-Holliday junction (HJ) complex. HJ DNA is sandwiched between 2 RuvA tetramers; dsDNA enters through RuvA and exits via RuvB. An RuvB hexamer assembles on each DNA strand where it exits the tetramer. Each RuvB hexamer is contacted by two RuvA subunits (via domain III) on 2 adjacent RuvB subunits; this complex drives branch migration. In the full resolvosome a probable DNA-RuvA(4)-RuvB(12)-RuvC(2) complex forms which resolves the HJ.

Its subcellular location is the cytoplasm. The enzyme catalyses ATP + H2O = ADP + phosphate + H(+). In terms of biological role, the RuvA-RuvB-RuvC complex processes Holliday junction (HJ) DNA during genetic recombination and DNA repair, while the RuvA-RuvB complex plays an important role in the rescue of blocked DNA replication forks via replication fork reversal (RFR). RuvA specifically binds to HJ cruciform DNA, conferring on it an open structure. The RuvB hexamer acts as an ATP-dependent pump, pulling dsDNA into and through the RuvAB complex. RuvB forms 2 homohexamers on either side of HJ DNA bound by 1 or 2 RuvA tetramers; 4 subunits per hexamer contact DNA at a time. Coordinated motions by a converter formed by DNA-disengaged RuvB subunits stimulates ATP hydrolysis and nucleotide exchange. Immobilization of the converter enables RuvB to convert the ATP-contained energy into a lever motion, pulling 2 nucleotides of DNA out of the RuvA tetramer per ATP hydrolyzed, thus driving DNA branch migration. The RuvB motors rotate together with the DNA substrate, which together with the progressing nucleotide cycle form the mechanistic basis for DNA recombination by continuous HJ branch migration. Branch migration allows RuvC to scan DNA until it finds its consensus sequence, where it cleaves and resolves cruciform DNA. In Clostridium perfringens (strain 13 / Type A), this protein is Holliday junction branch migration complex subunit RuvB.